Here is a 455-residue protein sequence, read N- to C-terminus: MAQPHFLLVTFPAQGHVNPSLRFARRLIKTTGARVTFATCLSVIHRSMIPNHNNVENLSFLTFSDGFDDGVISNTDDVQNRLVHFERNGDKALSDFIEANQNGDSPVSCLIYTILPNWVPKVARRFHLPSVHLWIQPAFAFDIYYNYSTGNNSVFEFPNLPSLEIRDLPSFLSPSNTNKAAQAVYQELMDFLKEESNPKILVNTFDSLEPEFLTAIPNIEMVAVGPLLPAEIFTGSESGKDLSRDHQSSSYTLWLDSKTESSVIYVSFGTMVELSKKQIEELARALIEGGRPFLWVITDKLNREAKIEGEEETEIEKIAGFRHELEEVGMIVSWCSQIEVLRHRAIGCFLTHCGWSSSLESLVLGVPVVAFPMWSDQPANAKLLEEIWKTGVRVRENSEGLVERGEIMRCLEAVMEAKSVELRENAEKWKRLATEAGREGGSSDKNVEAFVKSLF.

The active-site Proton acceptor is the His16. An anthocyanidin is bound at residue His16. Positions 337, 352, 355, 357, 360, 376, and 377 each coordinate UDP-alpha-D-glucose.

The protein belongs to the UDP-glycosyltransferase family.

It carries out the reaction (indol-3-yl)acetate + UDP-alpha-D-glucose = 1-O-(indol-3-ylacetyl)-beta-D-glucose + UDP. The protein operates within plant hormone metabolism; auxin conjugation. In terms of biological role, possesses low catalytic activity in vitro. Also active as glucosyltransferase in vitro on benzoates and benzoate derivatives. The protein is UDP-glycosyltransferase 75B2 (UGT75B2) of Arabidopsis thaliana (Mouse-ear cress).